Here is a 355-residue protein sequence, read N- to C-terminus: IGF-like family receptor 1 (355 aa).

An N-terminal signal peptide occupies residues 1 to 22 (MGPGRCLLTALLLLALAPPPEA). The Extracellular segment spans residues 23 to 163 (SQYCGRLEYW…PQQAWPNFLP (141 aa)). The segment at 120–147 (KGHCPLTPGNPGAPSSQERSSPASSIAW) is disordered. A compositionally biased stretch (low complexity) spans 132–144 (APSSQERSSPASS). A helical transmembrane segment spans residues 164–184 (LVVLVLLLTLAVIAILLFILL). Residues 185–355 (WHLCWPKEKA…KLGSSGVCWA (171 aa)) lie on the Cytoplasmic side of the membrane.

The protein localises to the cell membrane. Functionally, probable cell membrane receptor for the IGF-like family proteins. Binds IGFL1 and IGFL3 with a higher affinity. May also bind IGFL2. In Homo sapiens (Human), this protein is IGF-like family receptor 1 (IGFLR1).